The chain runs to 139 residues: Asp-hemolysin (139 aa).

The propeptide occupies 1–5 (MASVQ). Residues 47–79 (TSEDVQQKTAPPGGSVNVNSCGRSDASSGTTGG) are disordered. A compositionally biased stretch (polar residues) spans 62-75 (VNVNSCGRSDASSG).

Belongs to the aegerolysin family.

The protein is Asp-hemolysin of Aspergillus fumigatus (strain ATCC MYA-4609 / CBS 101355 / FGSC A1100 / Af293) (Neosartorya fumigata).